The sequence spans 124 residues: Translation initiation factor 5A (124 aa).

Residues 27–53 form a disordered region; it reads TSYSTSKPGKHGSAKARVEGTGVFDGQ. A Hypusine modification is found at Lys36.

It belongs to the eIF-5A family.

Its subcellular location is the cytoplasm. Functions by promoting the formation of the first peptide bond. The polypeptide is Translation initiation factor 5A (Natronomonas pharaonis (strain ATCC 35678 / DSM 2160 / CIP 103997 / JCM 8858 / NBRC 14720 / NCIMB 2260 / Gabara) (Halobacterium pharaonis)).